Consider the following 362-residue polypeptide: Mannan endo-1,4-beta-mannosidase (362 aa).

The first 26 residues, Met-1–Ala-26, serve as a signal peptide directing secretion. The GH26 domain occupies Gln-38 to Gly-349. His-131 contributes to the substrate binding site. The active-site Proton donor is Glu-193. Trp-198 and Tyr-268 together coordinate substrate. Glu-292 (nucleophile) is an active-site residue. Trp-324–Asn-325 is a binding site for substrate.

This sequence belongs to the glycosyl hydrolase 26 family. Homodimer.

Its subcellular location is the secreted. It catalyses the reaction Random hydrolysis of (1-&gt;4)-beta-D-mannosidic linkages in mannans, galactomannans and glucomannans.. Involved in the degradation of glucomannan. Catalyzes the endo hydrolysis of beta-1,4-linked mannan, galactomannan and glucomannan. The chain is Mannan endo-1,4-beta-mannosidase from Bacillus subtilis (strain 168).